The primary structure comprises 156 residues: Endoribonuclease YbeY (156 aa).

Zn(2+)-binding residues include His-122, His-126, and His-132.

Belongs to the endoribonuclease YbeY family. The cofactor is Zn(2+).

The protein localises to the cytoplasm. Functionally, single strand-specific metallo-endoribonuclease involved in late-stage 70S ribosome quality control and in maturation of the 3' terminus of the 16S rRNA. The sequence is that of Endoribonuclease YbeY from Bacillus cereus (strain ZK / E33L).